A 162-amino-acid polypeptide reads, in one-letter code: Protein S40-4 (162 aa).

It belongs to the senescence regulator S40 family.

The protein resides in the cytoplasm. In Arabidopsis thaliana (Mouse-ear cress), this protein is Protein S40-4.